Consider the following 236-residue polypeptide: NLP effector protein 3 (236 aa).

A signal peptide spans 1–19 (MNLLGFLAVVALSTASVQA). Positions 103–113 (AIMYSWYFPKD) match the Conserved undecapeptide motif I motif. A Hepta-peptide GHRHDWE motif II motif is present at residues 120 to 126 (GHRHDWE).

The protein belongs to the Necrosis inducing protein (NPP1) family.

It is found in the secreted. Secreted effector that contributes to virulence during infection by P.capsici. Induces distinct chlorosis at 3 days after inoculation of host C.annuum leaves, and all the chlorotic areas gradually turn brown and become moderately necrotic at 7 days after inoculation. Leads only to chlorotic areas, without necrosis at 7 days after non-host N.benthamiana leaves infection. Induces cell death in hot pepper. The protein is NLP effector protein 3 of Phytophthora capsici.